Reading from the N-terminus, the 74-residue chain is Antimicrobial peptide AcrAP2 (74 aa).

The N-terminal stretch at 1 to 22 (MEIKYLLTVFLVLLIVSDHCQA) is a signal peptide. K40 carries the post-translational modification Lysine amide. A propeptide spanning residues 46-74 (NLDGQIDRFRNFRKRDAELEELLSKLPIY) is cleaved from the precursor.

It belongs to the non-disulfide-bridged peptide (NDBP) superfamily. Short antimicrobial peptide (group 4) family. Expressed by the venom gland.

Its subcellular location is the secreted. The protein localises to the target cell membrane. Its function is as follows. Has antimicrobial activity against the Gram-positive bacteria S.aureus (MIC=8 uM) and the yeast C.albicans (MIC=16 uM). Causes hemolysis on horse erythrocytes (64 uM for 100% hemolysis). Minimum bactericidal concentrations have also been tested against S.aureus and is four-fold higher (MBC=32 uM). The sequence is that of Antimicrobial peptide AcrAP2 from Androctonus crassicauda (Arabian fat-tailed scorpion).